Consider the following 632-residue polypeptide: Arginyl-tRNA--protein transferase 1 (632 aa).

The segment covering 1 to 18 has biased composition (polar residues); it reads MSLKNDASSSHDGGSNRE. Disordered stretches follow at residues 1–27, 113–144, 284–312, and 517–580; these read MSLK…HGRR, KLDV…AKSE, NGNI…HQAR, and PAAS…NDIN. The segment covering 113–122 has biased composition (basic and acidic residues); the sequence is KLDVQPREQR. Positions 285–296 are enriched in polar residues; sequence GNISRGANSLDG. Over residues 298–310 the composition is skewed to basic and acidic residues; it reads ETLHAKKDSENHQ. Residues 538 to 563 are compositionally biased toward acidic residues; the sequence is SDEDEDEDEDDDDDDDDDEEMYETES. The span at 564–578 shows a compositional bias: basic and acidic residues; the sequence is EDSHIESDPGSKDND.

This sequence belongs to the R-transferase family.

The enzyme catalyses an N-terminal L-alpha-aminoacyl-[protein] + L-arginyl-tRNA(Arg) = an N-terminal L-arginyl-L-aminoacyl-[protein] + tRNA(Arg) + H(+). Functionally, involved in the post-translational conjugation of arginine to the N-terminal aspartate or glutamate of a protein. This arginylation is required for degradation of the protein via the ubiquitin pathway. Component of the N-end rule pathway with ATE2 and PRT6. The N-end rule pathway regulates seed after-ripening, seedling sugar sensitivity, seedling lipid breakdown, and abscisic acid (ABA) sensitivity of germination. The end-rule pathway regulates various aspects of leaf and shoot development. Involved in the oxygen-dependent N-arginylation of RAP2-12, an activator of hypoxic gene expression. This N-terminal modification leads to ubiquitination by PRT6 and subsequent degradation of RAP2-12 under aerobic conditions. Has an important role in the progression of leaf senescence. Involved in disease resistance. The end-rule pathway plays a role in regulating the timing and amplitude of the immune response following infection with the bacterial pathogen Pseudomonas syringae pv tomato. Regulates the biosynthesis of plant-defense metabolites such as glucosinolates, and the biosynthesis and response to the phytohormone jasmonate (JA), which plays a key role in plant immunity. The protein is Arginyl-tRNA--protein transferase 1 of Arabidopsis thaliana (Mouse-ear cress).